The sequence spans 108 residues: Parvalbumin beta 2 (108 aa).

At serine 2 the chain carries N-acetylserine. EF-hand domains are found at residues 38–73 (KSSDDVKKAFYVIDQDKSGFIEEDELKLFLQNFSAS) and 77–108 (LTDAETKAFLADGDKDGDGMIGVDEFAAMIKG). The Ca(2+) site is built by aspartate 51, aspartate 53, serine 55, phenylalanine 57, glutamate 59, glutamate 62, aspartate 90, aspartate 92, aspartate 94, methionine 96, and glutamate 101.

Belongs to the parvalbumin family.

Its function is as follows. In muscle, parvalbumin is thought to be involved in relaxation after contraction. It binds two calcium ions. This is Parvalbumin beta 2 from Salmo salar (Atlantic salmon).